A 458-amino-acid chain; its full sequence is Phosphoglucosamine mutase (458 aa).

The Phosphoserine intermediate role is filled by Ser106. Mg(2+) contacts are provided by Ser106, Asp247, Asp249, and Asp251. A Phosphoserine modification is found at Ser106.

It belongs to the phosphohexose mutase family. It depends on Mg(2+) as a cofactor. Activated by phosphorylation.

It catalyses the reaction alpha-D-glucosamine 1-phosphate = D-glucosamine 6-phosphate. Its function is as follows. Catalyzes the conversion of glucosamine-6-phosphate to glucosamine-1-phosphate. The polypeptide is Phosphoglucosamine mutase (Chlamydia caviae (strain ATCC VR-813 / DSM 19441 / 03DC25 / GPIC) (Chlamydophila caviae)).